A 1449-amino-acid chain; its full sequence is VWFA and cache domain-containing protein CG16868 (1449 aa).

The N-terminal stretch at 1 to 23 (MWPNSNLNAVLLILAVLACPTSS) is a signal peptide. Over 24–1220 (QHVPLAMANS…NPQREQHAYS (1197 aa)) the chain is Extracellular. N-linked (GlcNAc...) asparagine glycosylation is found at N32, N112, N153, N407, N447, and N497. The 222-residue stretch at 320–541 (FVLFLIDVGS…TSLPQTSSRI (222 aa)) folds into the VWFA domain. The Cache 1 domain maps to 557 to 639 (VHPPVVDADS…PRPLIQRETS (83 aa)). N-linked (GlcNAc...) asparagine glycosylation is found at N649, N668, and N707. Residues 889 to 934 (TAPYLDAGGAGYIITIAHTIFEGKAHALHSAQQDRPVAVVALDVPY) enclose the Cache 2 domain. 4 N-linked (GlcNAc...) asparagine glycosylation sites follow: N1015, N1025, N1059, and N1111. A helical transmembrane segment spans residues 1221–1241 (AFGPLGGAIVVLVMVIGFAIY). Topologically, residues 1242–1449 (CYRHNLDAQT…VHRHMETAES (208 aa)) are cytoplasmic. Disordered regions lie at residues 1307–1339 (YHVS…SSDQ) and 1352–1416 (DKRH…GGSV). Residues 1359-1369 (DTMSISTSISS) are compositionally biased toward low complexity. Polar residues predominate over residues 1370–1392 (PTNRQQSSSQPNTHPYLSNQPTS).

This sequence belongs to the calcium channel subunit alpha-2/delta family.

The protein resides in the membrane. This chain is VWFA and cache domain-containing protein CG16868, found in Drosophila melanogaster (Fruit fly).